A 140-amino-acid polypeptide reads, in one-letter code: Neurotrophin-7 (140 aa).

Residues 1 to 7 constitute a propeptide that is removed on maturation; it reads PGPRVRR. 3 disulfides stabilise this stretch: Cys-21–Cys-101, Cys-64–Cys-129, and Cys-89–Cys-131.

This sequence belongs to the NGF-beta family.

The protein localises to the secreted. The sequence is that of Neurotrophin-7 (ntf7) from Cyprinus carpio (Common carp).